A 188-amino-acid chain; its full sequence is GTP cyclohydrolase 1 (188 aa).

Zn(2+) is bound by residues cysteine 76, histidine 79, and cysteine 148.

It belongs to the GTP cyclohydrolase I family. Toroid-shaped homodecamer, composed of two pentamers of five dimers.

It catalyses the reaction GTP + H2O = 7,8-dihydroneopterin 3'-triphosphate + formate + H(+). Its pathway is cofactor biosynthesis; 7,8-dihydroneopterin triphosphate biosynthesis; 7,8-dihydroneopterin triphosphate from GTP: step 1/1. The polypeptide is GTP cyclohydrolase 1 (Caldanaerobacter subterraneus subsp. tengcongensis (strain DSM 15242 / JCM 11007 / NBRC 100824 / MB4) (Thermoanaerobacter tengcongensis)).